The chain runs to 328 residues: Beta-ketoacyl-[acyl-carrier-protein] synthase III (328 aa).

Residues Cys-122 and His-255 contribute to the active site. Residues 256 to 260 form an ACP-binding region; the sequence is QANIR. Asn-285 is an active-site residue.

Belongs to the thiolase-like superfamily. FabH family. As to quaternary structure, homodimer.

The protein localises to the cytoplasm. The enzyme catalyses malonyl-[ACP] + acetyl-CoA + H(+) = 3-oxobutanoyl-[ACP] + CO2 + CoA. It participates in lipid metabolism; fatty acid biosynthesis. In terms of biological role, catalyzes the condensation reaction of fatty acid synthesis by the addition to an acyl acceptor of two carbons from malonyl-ACP. Catalyzes the first condensation reaction which initiates fatty acid synthesis and may therefore play a role in governing the total rate of fatty acid production. Possesses both acetoacetyl-ACP synthase and acetyl transacylase activities. Its substrate specificity determines the biosynthesis of branched-chain and/or straight-chain of fatty acids. This Herminiimonas arsenicoxydans protein is Beta-ketoacyl-[acyl-carrier-protein] synthase III.